We begin with the raw amino-acid sequence, 143 residues long: NADH-quinone oxidoreductase subunit A (143 aa).

Transmembrane regions (helical) follow at residues 8–28 (FGNVFVFLLLGVVFVAGGYLT), 63–83 (FYVVALIFIIFDVEVVFLFPW), and 93–113 (FALIEALVFAGILILGLVYAW).

It belongs to the complex I subunit 3 family. As to quaternary structure, NDH-1 is composed of 14 different subunits. Subunits NuoA, H, J, K, L, M, N constitute the membrane sector of the complex.

The protein localises to the cell inner membrane. It carries out the reaction a quinone + NADH + 5 H(+)(in) = a quinol + NAD(+) + 4 H(+)(out). In terms of biological role, NDH-1 shuttles electrons from NADH, via FMN and iron-sulfur (Fe-S) centers, to quinones in the respiratory chain. The immediate electron acceptor for the enzyme in this species is believed to be a menaquinone. Couples the redox reaction to proton translocation (for every two electrons transferred, four hydrogen ions are translocated across the cytoplasmic membrane), and thus conserves the redox energy in a proton gradient. This is NADH-quinone oxidoreductase subunit A from Chlorobium luteolum (strain DSM 273 / BCRC 81028 / 2530) (Pelodictyon luteolum).